A 369-amino-acid chain; its full sequence is Pyrimidine monooxygenase RutA (369 aa).

Residues 49-50 (IK), Asn-115, Glu-124, 140-141 (RY), and Ser-190 contribute to the FMN site.

Belongs to the NtaA/SnaA/DszA monooxygenase family. RutA subfamily.

It catalyses the reaction uracil + FMNH2 + NADH + O2 = (Z)-3-ureidoacrylate + FMN + NAD(+) + H2O + H(+). It carries out the reaction thymine + FMNH2 + NADH + O2 = (Z)-2-methylureidoacrylate + FMN + NAD(+) + H2O + H(+). Catalyzes the pyrimidine ring opening between N-3 and C-4 by an unusual flavin hydroperoxide-catalyzed mechanism, adding oxygen atoms in the process to yield ureidoacrylate peracid, that immediately reacts with FMN forming ureidoacrylate and FMN-N(5)-oxide. The FMN-N(5)-oxide reacts spontaneously with NADH to produce FMN. Requires the flavin reductase RutF to regenerate FMN in vivo. This is Pyrimidine monooxygenase RutA from Acinetobacter baylyi (strain ATCC 33305 / BD413 / ADP1).